Reading from the N-terminus, the 149-residue chain is Large ribosomal subunit protein bL9 (149 aa).

The protein belongs to the bacterial ribosomal protein bL9 family.

In terms of biological role, binds to the 23S rRNA. This Synechococcus sp. (strain JA-2-3B'a(2-13)) (Cyanobacteria bacterium Yellowstone B-Prime) protein is Large ribosomal subunit protein bL9.